The sequence spans 419 residues: Synaptotagmin-1 (419 aa).

Residues 1–57 (MVSESHHEALAAPPVTTVATVLPSNATEPASPGEGKEDAFSKLKEKFMNELHKIPLP) are Vesicular-facing. Asn-25 carries an N-linked (GlcNAc...) asparagine glycan. A helical membrane pass occupies residues 58-80 (PWALIAIAIVAVLLVLTCCFCIC). Residues Cys-75, Cys-76, Cys-78, Cys-80, and Cys-83 are each lipidated (S-palmitoyl cysteine). Residues 81-419 (KKCLFKKKNK…EVDAMLAVKK (339 aa)) are Cytoplasmic-facing. Positions 108 to 139 (KDLGKTMKDQDDDAETGLTDGEEKEEPKEEEK) are disordered. Residues 117-131 (QDDDAETGLTDGEEK) show a composition bias toward acidic residues. Residue Thr-126 is modified to Phosphothreonine. The tract at residues 133 to 379 (EPKEEEKLGK…AIGKVFVGYN (247 aa)) is phospholipid binding. In terms of domain architecture, C2 1 spans 139-258 (KLGKLQYSLD…DFGHVTEEWR (120 aa)). Ca(2+) is bound by residues Leu-169, Asp-170, and Asp-176. Tyr-227 carries the phosphotyrosine modification. Positions 228, 229, 230, 233, 234, and 236 each coordinate Ca(2+). Residue Ser-262 is modified to Phosphoserine. The C2 2 domain occupies 270 to 403 (KLGDICFSLR…NPRRPIAQWH (134 aa)). Ca(2+)-binding residues include Asp-301 and Asp-307. Ser-340 and Ser-342 each carry phosphoserine. Ca(2+) contacts are provided by Asp-361, Asp-363, and Asp-369.

This sequence belongs to the synaptotagmin family. As to quaternary structure, homotetramer. Heterodimer; heterodimerizes with SYT2 in presence of calcium. Interacts with SCAMP5. Interacts with STON2. Forms a complex with SV2B, syntaxin 1 and SNAP25. Interacts with SV2A, SV2B and SV2C. Interacts with RIMS1. Interacts with PRRT2. Interacts with DNAJC5 in a phosphorylation-dependent manner. Interacts (via N-terminus) with RAB3A. Interacts with SYT12. Interacts with calmodulin. Interacts with DNM1 (via C-terminal proline-rich domain (PRD)); this interaction facilitates vesicle fission during clathrin-mediated endocytosis (CME). Requires Ca(2+) as cofactor. Glycosylated.

Its subcellular location is the cytoplasmic vesicle. It is found in the secretory vesicle membrane. The protein resides in the secretory vesicle. It localises to the synaptic vesicle membrane. The protein localises to the chromaffin granule membrane. Its subcellular location is the cytoplasm. Functionally, calcium sensor that participates in triggering neurotransmitter release at the synapse. May have a regulatory role in the membrane interactions during trafficking of synaptic vesicles at the active zone of the synapse. It binds acidic phospholipids with a specificity that requires the presence of both an acidic head group and a diacyl backbone. A Ca(2+)-dependent interaction between synaptotagmin and putative receptors for activated protein kinase C has also been reported. It can bind to at least three additional proteins in a Ca(2+)-independent manner; these are neurexins, syntaxin and AP2. Plays a role in dendrite formation by melanocytes. This chain is Synaptotagmin-1, found in Macaca fascicularis (Crab-eating macaque).